We begin with the raw amino-acid sequence, 528 residues long: Linear primary-alkylsulfatase (528 aa).

His-42, His-44, Asp-46, His-47, Glu-151, and Glu-170 together coordinate Zn(2+). Sulfate contacts are provided by residues 179-184 (NVHTLR) and Arg-189. Residue His-213 coordinates Zn(2+). Residue Tyr-275 participates in sulfate binding.

This sequence belongs to the metallo-beta-lactamase superfamily. Type III sulfatase family. The cofactor is Zn(2+).

The enzyme catalyses a primary linear alkyl sulfate ester + H2O = a primary alcohol + sulfate + H(+). Functionally, alkylsulfatase that cleaves the widely used detergent sodium dodecyl sulfate (SDS), which allows the bacterium to use SDS as a sole carbon or sulfur source. This is Linear primary-alkylsulfatase from Pseudomonas sp. (strain ATCC 19151).